The primary structure comprises 309 residues: Nucleotide-binding protein cgR_1639 (309 aa).

An ATP-binding site is contributed by 32 to 39 (GMSGAGLS). GTP is bound at residue 83-86 (DVRS).

This sequence belongs to the RapZ-like family.

In terms of biological role, displays ATPase and GTPase activities. This Corynebacterium glutamicum (strain R) protein is Nucleotide-binding protein cgR_1639.